We begin with the raw amino-acid sequence, 2217 residues long: DNA polymerase epsilon catalytic subunit A (2217 aa).

Cys-2104, Cys-2107, Cys-2126, and Cys-2129 together coordinate Zn(2+). The segment at 2104-2129 adopts a CysA-type zinc-finger fold; the sequence is CEYCSYVSDLDLCRDGLDGKFQCPRC. Positions 2160, 2163, 2175, and 2177 each coordinate [4Fe-4S] cluster. The CysB motif signature appears at 2160 to 2177; the sequence is CEKCHTVKRDLMSTNCNC.

This sequence belongs to the DNA polymerase type-B family. In terms of assembly, heterotetramer. Consists of 4 subunits: POL2, DPB2, DPB3 and DPB4. [4Fe-4S] cluster is required as a cofactor.

It is found in the nucleus. It catalyses the reaction DNA(n) + a 2'-deoxyribonucleoside 5'-triphosphate = DNA(n+1) + diphosphate. Functionally, DNA polymerase II participates in chromosomal DNA replication. This chain is DNA polymerase epsilon catalytic subunit A (POL2), found in Candida glabrata (strain ATCC 2001 / BCRC 20586 / JCM 3761 / NBRC 0622 / NRRL Y-65 / CBS 138) (Yeast).